The primary structure comprises 965 residues: MASSHSSSPVPQGSSSDVFFKKEVDPTKHVRPVQSLPDVCPKEPTVTDQHRWTVYHSKVNLPAALNDPTLAKRESDFFTKTWGLGFVDTEVIPSLYLPQISKEHFIAYQQEISQREKIHERCKNICPPKDTFDRTLLHIHDKSRTDLEQVPKIFMKPDFALDDSLTFNSVLPWSHFNTAGGKGNRDAASSKLLQEKLSHYLDIVEVNIAHQISLRSEAFFHAMTSQHELQDYLKKTSQAVKMLRDKIAQIDKVMCEGSLQILRLALTRNNCVKVSNKLKLMATVHQTQPTVQVLLSTSEFVGALDLIATTQEVLQQELQGVHSFRHLGSQLCELEKLIDKMMIAEFSTYSHSDLNRPLEGECQVLEEERLVSLVFGLLEQRKLNFLEIYGEETIITAKNIIKECVINKVAQVEEIDTDAVVKLADQMRMLNFPQWIDLLKDIFSKFTIFLQRVKATLNVIHSVVLSVLDKNQRTRELEEVSQQRSAGKDNSLDTEVAYLTHEGLFISDAFSEAEPASAAVDTTSQRNTSPHSEPCSSDSVSEPECTTDSSSSKEQTPASATLGGVDIIVSEDMRLTDLELGKLASNIQELLCNASDVCHDRAVKFLMSRAKDGFLEKLNSTEFIALSRLMETYIVDTEQICGRKSTSLLGALQSQANKFVNRFHEERRTKLSLLLDNERWKQADVPAEFQDLVDSIADGKIALPDKKPAATEDRKPADVLVVEGHQYAVVGTVLLLIRIILEYCQCVDNIPSVTTDMLTRLTDLLKYFNSRSCQLVLGAGALQVVGLKTITTKNLALSSRCLQLIVHYIPVIRAHFEARLPRKQWSLLRHFDHITKDYHDHIGEISSKLIAIMDSLFDKLLSRCEVEAPAPSPCFRNICKQMTKMHEAIFDLLPKEQTQMLILRINASYKFHLKKQLSHLNVINDGGPQSGFVTADVAFYTGNLQALKGLKDLDLNMAEIWEQKR.

S8 is modified (phosphoserine). The stretch at 228–249 forms a coiled coil; it reads ELQDYLKKTSQAVKMLRDKIAQ. A disordered region spans residues 516–558; the sequence is ASAAVDTTSQRNTSPHSEPCSSDSVSEPECTTDSSSSKEQTPA. The segment covering 520-558 has biased composition (polar residues); it reads VDTTSQRNTSPHSEPCSSDSVSEPECTTDSSSSKEQTPA.

Belongs to the VPS54 family. Component of the Golgi-associated retrograde protein (GARP) complex, also called VFT (VPS fifty-three) complex, composed of VPS51, VPS52, VPS53 and VPS54. EIPR1 interacts with GARP complex and mediates its recruitment to the trans-Golgi network. Interacts with VPS51 in an EIPR1-independent manner. In terms of tissue distribution, ubiquitously expressed at low level.

It is found in the golgi apparatus. The protein resides in the trans-Golgi network. It localises to the membrane. In terms of biological role, acts as a component of the GARP complex that is involved in retrograde transport from early and late endosomes to the trans-Golgi network (TGN). The GARP complex is required for the maintenance of the cycling of mannose 6-phosphate receptors between the TGN and endosomes, this cycling is necessary for proper lysosomal sorting of acid hydrolases such as CTSD. Within the GARP complex, required to tether the complex to the TGN. Not involved in endocytic recycling. The chain is Vacuolar protein sorting-associated protein 54 (Vps54) from Rattus norvegicus (Rat).